The primary structure comprises 267 residues: Thiamine pyrophosphokinase 2 (267 aa).

It belongs to the thiamine pyrophosphokinase family.

Its subcellular location is the cytoplasm. It localises to the cytosol. It carries out the reaction thiamine + ATP = thiamine diphosphate + AMP + H(+). It participates in cofactor biosynthesis; thiamine diphosphate biosynthesis; thiamine diphosphate from thiamine: step 1/1. Catalyzes the phosphorylation of thiamine to thiamine pyrophosphate (TPP). TPP is an active cofactor for enzymes involved in glycolysis and energy production. Plant leaves require high levels of TPP for photosynthesis and carbohydrate metabolism. The polypeptide is Thiamine pyrophosphokinase 2 (TPK2) (Oryza sativa subsp. japonica (Rice)).